A 324-amino-acid polypeptide reads, in one-letter code: NADH-ubiquinone oxidoreductase chain 1 (324 aa).

The next 8 helical transmembrane spans lie at 9–29 (LTMA…LTLV), 75–95 (ILFI…WIPL), 106–126 (LGLL…LWSG), 142–162 (VAQT…VIML), 177–197 (PLYL…STLA), 228–248 (LFFL…AILF), 259–279 (ELFP…FLWV), and 300–320 (LPLT…YAGI).

It belongs to the complex I subunit 1 family.

Its subcellular location is the mitochondrion inner membrane. The enzyme catalyses a ubiquinone + NADH + 5 H(+)(in) = a ubiquinol + NAD(+) + 4 H(+)(out). Its function is as follows. Core subunit of the mitochondrial membrane respiratory chain NADH dehydrogenase (Complex I) that is believed to belong to the minimal assembly required for catalysis. Complex I functions in the transfer of electrons from NADH to the respiratory chain. The immediate electron acceptor for the enzyme is believed to be ubiquinone. This is NADH-ubiquinone oxidoreductase chain 1 (MT-ND1) from Struthio camelus (Common ostrich).